A 493-amino-acid chain; its full sequence is Probable cytosol aminopeptidase (493 aa).

Residues Lys-258 and Asp-263 each contribute to the Mn(2+) site. Lys-270 is a catalytic residue. Residues Asp-281, Asp-340, and Glu-342 each contribute to the Mn(2+) site. Arg-344 is a catalytic residue.

The protein belongs to the peptidase M17 family. Mn(2+) is required as a cofactor.

The protein localises to the cytoplasm. It catalyses the reaction Release of an N-terminal amino acid, Xaa-|-Yaa-, in which Xaa is preferably Leu, but may be other amino acids including Pro although not Arg or Lys, and Yaa may be Pro. Amino acid amides and methyl esters are also readily hydrolyzed, but rates on arylamides are exceedingly low.. The catalysed reaction is Release of an N-terminal amino acid, preferentially leucine, but not glutamic or aspartic acids.. Presumably involved in the processing and regular turnover of intracellular proteins. Catalyzes the removal of unsubstituted N-terminal amino acids from various peptides. In Caulobacter vibrioides (strain ATCC 19089 / CIP 103742 / CB 15) (Caulobacter crescentus), this protein is Probable cytosol aminopeptidase.